The chain runs to 404 residues: Probable tRNA sulfurtransferase (404 aa).

The 106-residue stretch at 60–165 folds into the THUMP domain; the sequence is QPIVEALKLV…DEAAYISYEE (106 aa). ATP contacts are provided by residues 183-184, 208-209, Arg265, Gly287, and Gln296; these read ML and HF.

This sequence belongs to the ThiI family.

The protein localises to the cytoplasm. The enzyme catalyses [ThiI sulfur-carrier protein]-S-sulfanyl-L-cysteine + a uridine in tRNA + 2 reduced [2Fe-2S]-[ferredoxin] + ATP + H(+) = [ThiI sulfur-carrier protein]-L-cysteine + a 4-thiouridine in tRNA + 2 oxidized [2Fe-2S]-[ferredoxin] + AMP + diphosphate. It catalyses the reaction [ThiS sulfur-carrier protein]-C-terminal Gly-Gly-AMP + S-sulfanyl-L-cysteinyl-[cysteine desulfurase] + AH2 = [ThiS sulfur-carrier protein]-C-terminal-Gly-aminoethanethioate + L-cysteinyl-[cysteine desulfurase] + A + AMP + 2 H(+). It functions in the pathway cofactor biosynthesis; thiamine diphosphate biosynthesis. Functionally, catalyzes the ATP-dependent transfer of a sulfur to tRNA to produce 4-thiouridine in position 8 of tRNAs, which functions as a near-UV photosensor. Also catalyzes the transfer of sulfur to the sulfur carrier protein ThiS, forming ThiS-thiocarboxylate. This is a step in the synthesis of thiazole, in the thiamine biosynthesis pathway. The sulfur is donated as persulfide by IscS. This chain is Probable tRNA sulfurtransferase, found in Streptococcus pyogenes serotype M12 (strain MGAS2096).